The primary structure comprises 474 residues: Coiled-coil domain-containing protein 6 (474 aa).

Over residues 1–10 the composition is skewed to acidic residues; that stretch reads MADSASESDT. The interval 1–47 is disordered; the sequence is MADSASESDTDGAGGNSSSSAAMQSSCSSTSGGGGGGGGGGGGGKSG. Alanine 2 carries the post-translational modification N-acetylalanine. Residues 16-30 are compositionally biased toward low complexity; it reads NSSSSAAMQSSCSST. Residues 31 to 47 are compositionally biased toward gly residues; that stretch reads SGGGGGGGGGGGGGKSG. Serine 52 carries the phosphoserine modification. Residues 53-237 adopt a coiled-coil conformation; it reads PFRLEELTNR…KRILQEKLDQ (185 aa). 3 consecutive repeat copies span residues 106 to 134, 135 to 163, and 164 to 192. The 5 X 29 AA tandem repeats stretch occupies residues 106 to 235; that stretch reads EQEEEFISNT…AEKRILQEKL (130 aa). Residues 193 to 206 form a 4; approximate repeat; the sequence is EQLRREKIDLENTL. The stretch at 207-235 is repeat 5; sequence EQEQEALVNRLWKRMDKLEAEKRILQEKL. Phosphoserine occurs at positions 240, 244, 249, 254, 284, and 323. A coiled-coil region spans residues 253–332; sequence DSPENMMRHI…SESESSLEMD (80 aa). The tract at residues 342–369 is disordered; it reads AQGLRPRTVSSPIPYTPSPSSSRPISPG. Residue threonine 349 is modified to Phosphothreonine. A compositionally biased stretch (low complexity) spans 351 to 368; it reads SSPIPYTPSPSSSRPISP. 2 positions are modified to phosphoserine: serine 363 and serine 367. Residue arginine 387 is modified to Omega-N-methylarginine. Phosphoserine occurs at positions 395 and 413. The tract at residues 397–474 is disordered; the sequence is GLHVQHMGTS…QHSAHPSSQP (78 aa). The segment covering 426–451 has biased composition (pro residues); sequence PTPPPSPNTQTPVQPPPPPPPPPMQP. The short motif at 442–451 is the SH3-binding element; sequence PPPPPPPMQP. Residues 459-474 show a composition bias toward low complexity; it reads SQPTPSQHSAHPSSQP.

In terms of tissue distribution, ubiquitously expressed.

It is found in the cytoplasm. The protein localises to the cytoskeleton. The chain is Coiled-coil domain-containing protein 6 (CCDC6) from Homo sapiens (Human).